We begin with the raw amino-acid sequence, 364 residues long: Developmentally-regulated GTP-binding protein 2 (364 aa).

The residue at position 21 (K21) is a (3S)-3-hydroxylysine. Positions 63-288 (ARVALIGFPS…LLEMLWEYLA (226 aa)) constitute an OBG-type G domain. GTP-binding positions include 69-76 (GFPSVGKS), 94-98 (FTTLT), 115-118 (DLPG), 246-249 (NKID), and 269-271 (SCG). Residues S76 and T96 each contribute to the Mg(2+) site. The 76-residue stretch at 288–363 (ALTCIYTKKR…EHEDVIQIVK (76 aa)) folds into the TGS domain.

It belongs to the TRAFAC class OBG-HflX-like GTPase superfamily. OBG GTPase family. Interacts with RWDD1; this interaction confers protection to polyubiquitination and proteolytic degradation. Interacts with JMJD7; this interaction is direct. The cofactor is Mg(2+). In terms of processing, polyubiquitinated. Hydroxylated (with S stereochemistry) at C-3 of Lys-21 by JMJD7.

Its subcellular location is the nucleus. It localises to the cytoplasm. It carries out the reaction GTP + H2O = GDP + phosphate + H(+). Its function is as follows. Catalyzes the conversion of GTP to GDP through hydrolysis of the gamma-phosphate bond in GTP. When hydroxylated at C-3 of 'Lys-21' by JMJD7, may bind to RNA and play a role in translation. In Bos taurus (Bovine), this protein is Developmentally-regulated GTP-binding protein 2 (DRG2).